Consider the following 156-residue polypeptide: MNINLTLIGQAIAFAFFVAFCMKFVWPPLINAISERQRKIADGLNAAEKAKADLADAQAQVKQELDAAKAQAAQLIEQANRRAAQLIEEARTQAAAEGERIRQQAKEAVDQEINSAREELRQQVAALAVTGAEKILNQQVDAEAHNAMLSQLAAKL.

Residues 5–25 (LTLIGQAIAFAFFVAFCMKFV) traverse the membrane as a helical segment.

This sequence belongs to the ATPase B chain family. As to quaternary structure, F-type ATPases have 2 components, F(1) - the catalytic core - and F(0) - the membrane proton channel. F(1) has five subunits: alpha(3), beta(3), gamma(1), delta(1), epsilon(1). F(0) has three main subunits: a(1), b(2) and c(10-14). The alpha and beta chains form an alternating ring which encloses part of the gamma chain. F(1) is attached to F(0) by a central stalk formed by the gamma and epsilon chains, while a peripheral stalk is formed by the delta and b chains.

It is found in the cell inner membrane. Functionally, f(1)F(0) ATP synthase produces ATP from ADP in the presence of a proton or sodium gradient. F-type ATPases consist of two structural domains, F(1) containing the extramembraneous catalytic core and F(0) containing the membrane proton channel, linked together by a central stalk and a peripheral stalk. During catalysis, ATP synthesis in the catalytic domain of F(1) is coupled via a rotary mechanism of the central stalk subunits to proton translocation. In terms of biological role, component of the F(0) channel, it forms part of the peripheral stalk, linking F(1) to F(0). The chain is ATP synthase subunit b from Acinetobacter baumannii (strain AYE).